The sequence spans 112 residues: Small ribosomal subunit protein bS6 (112 aa).

This sequence belongs to the bacterial ribosomal protein bS6 family.

Functionally, binds together with bS18 to 16S ribosomal RNA. This Chlamydia muridarum (strain MoPn / Nigg) protein is Small ribosomal subunit protein bS6 (rpsF).